The following is a 355-amino-acid chain: Zinc finger protein CONSTANS-LIKE 5 (355 aa).

Zn(2+)-binding residues include Cys22, Cys25, Cys45, His50, Cys61, Cys64, Cys84, and His89. The segment at 22–60 (CDACKSVTAAVFCRVDSAFLCIACDTRIHSFTRHERVWV) adopts a B box-type 1; atypical zinc-finger fold. The segment at 61–103 (CEVCEQAPAAVTCKADAAALCVSCDADIHSANPLASRHERVPV) adopts a B box-type 2; atypical zinc-finger fold. In terms of domain architecture, CCT spans 285-327 (REARVLRYREKRKNRKFEKTIRYASRKAYAESRPRIKGRFAKR).

This sequence belongs to the CONSTANS family.

Its subcellular location is the nucleus. The polypeptide is Zinc finger protein CONSTANS-LIKE 5 (COL5) (Arabidopsis thaliana (Mouse-ear cress)).